A 369-amino-acid chain; its full sequence is Chanoclavine-I aldehyde reductase fgaOx3 (369 aa).

Residues 23–25 (PMT), A58, Q100, and H169 each bind FMN. Residues H169 and N172 each coordinate substrate. Y174 serves as the catalytic Proton donor. Residues G292, 316 to 317 (GR), and R317 contribute to the FMN site. A substrate-binding site is contributed by Y344.

It belongs to the NADH:flavin oxidoreductase/NADH oxidase family. As to quaternary structure, monomer. The cofactor is FMN.

It catalyses the reaction dihydrochanoclavine-I aldehyde + NADP(+) = chanoclavine-I aldehyde + NADPH + H(+). The protein operates within alkaloid biosynthesis; ergot alkaloid biosynthesis. Functionally, chanoclavine-I aldehyde reductase; part of the gene cluster that mediates the biosynthesis of isofumigaclavines, fungal ergot alkaloids. The tryptophan dimethylallyltransferase ifgA catalyzes the first step of ergot alkaloid biosynthesis by condensing dimethylallyl diphosphate (DMAP) and tryptophan to form 4-dimethylallyl-L-tryptophan. The second step is catalyzed by the methyltransferase ifgB that methylates 4-dimethylallyl-L-tryptophan in the presence of S-adenosyl-L-methionine, resulting in the formation of N-methyl-dimethylallyl-L-tryptophan. The catalase ifgD and the FAD-dependent oxidoreductase ifgC then transform N-methyl-dimethylallyl-L-tryptophan to chanoclavine-I which is further oxidized by ifgE in the presence of NAD(+), resulting in the formation of chanoclavine-I aldehyde. The chanoclavine-I aldehyde reductases ifgG and/or fgaOx3 reduce chanoclavine-I aldehyde to dihydrochanoclavine-I aldehyde that spontaneously dehydrates to form 6,8-dimethyl-6,7-didehydroergoline. The festuclavine dehydrogenases ifgF1 and/or ifgF2 then catalyze the reduction of 6,8-dimethyl-6,7-didehydroergoline to form festuclavine. Hydrolysis of festuclavine by a yet undetermined cytochrome P450 monooxygenase (called ifgH) then leads to the formation of isofumigaclavine B which is in turn acetylated by ifgI to isofumigaclavine A. Penicillium roqueforti has interestingly at least two sets of genes for the consumption of chanoclavine-I aldehyde on three different loci, the OYEs ifgG/fgaOx3 and the festuclavine synthase homologs ifgF1/ifgF2. The reason for the duplication of these genes is unclear, probably to ensure the conversion of chanoclavine-I aldehyde by differential gene expression under various environmental conditions. The polypeptide is Chanoclavine-I aldehyde reductase fgaOx3 (Penicillium roqueforti (strain FM164)).